The primary structure comprises 700 residues: Leucine zipper putative tumor suppressor 3 (700 aa).

Disordered regions lie at residues M1–H20, R40–K121, L133–L188, and F202–P344. The segment covering N109 to K121 has biased composition (basic and acidic residues). A compositionally biased stretch (polar residues) spans H203 to T216. 2 stretches are compositionally biased toward low complexity: residues D248–S265 and G301–S321. The segment covering G322 to G333 has biased composition (gly residues). S343 and S345 each carry phosphoserine. Coiled coils occupy residues S345 to D523 and T597 to E666. The interval R662–I700 is disordered. Positions H680–I700 are enriched in basic and acidic residues.

Belongs to the LZTS3 family. Interacts (via C-terminus) with SHANK3 (via PDZ domain). Interacts (via coiled coil) with SIPA1L1. Can form homooligomers.

It localises to the synapse. The protein localises to the postsynaptic density. It is found in the cell projection. The protein resides in the dendritic spine. Its subcellular location is the dendrite. It localises to the cytoplasm. The protein localises to the cytoskeleton. Functionally, may be involved in promoting the maturation of dendritic spines, probably via regulating SIPA1L1 levels at the postsynaptic density of synapses. This is Leucine zipper putative tumor suppressor 3 from Mus musculus (Mouse).